We begin with the raw amino-acid sequence, 704 residues long: Elongation factor G (704 aa).

The tr-type G domain maps to 8-291 (VRYRNIGISA…AVVEYLPSPS (284 aa)). Residues 17–24 (AHIDAGKT), 88–92 (DTPGH), and 142–145 (NKMD) contribute to the GTP site.

It belongs to the TRAFAC class translation factor GTPase superfamily. Classic translation factor GTPase family. EF-G/EF-2 subfamily.

The protein resides in the cytoplasm. Functionally, catalyzes the GTP-dependent ribosomal translocation step during translation elongation. During this step, the ribosome changes from the pre-translocational (PRE) to the post-translocational (POST) state as the newly formed A-site-bound peptidyl-tRNA and P-site-bound deacylated tRNA move to the P and E sites, respectively. Catalyzes the coordinated movement of the two tRNA molecules, the mRNA and conformational changes in the ribosome. The sequence is that of Elongation factor G from Blochmanniella pennsylvanica (strain BPEN).